The primary structure comprises 213 residues: THAP domain-containing protein 1 (213 aa).

The THAP-type zinc finger occupies 1–81 (MVQSCSAYGC…LKENAVPTIF (81 aa)). An HCFC1-binding motif (HBM) motif is present at residues 134-137 (DHNY). Positions 139 to 185 (VEDTMHQRKRIHQLEQQVEKLRKKLKTAQQRCRRQERQLEKLKEVVH) are involved in homodimer formation. The stretch at 139-190 (VEDTMHQRKRIHQLEQQVEKLRKKLKTAQQRCRRQERQLEKLKEVVHFQKEK) forms a coiled coil.

This sequence belongs to the THAP1 family. Homodimer. Interacts with PAWR. Component of a THAP1/THAP3-HCFC1-OGT complex that contains, either THAP1 or THAP3, HCFC1 and OGT. Interacts with OGT. Interacts (via the HBM) with HCFC1 (via the Kelch-repeat domain); the interaction recruits HCFC1 to the RRM1 promoter. As to expression, highly expressed in heart, skeletal muscle, kidney and liver. Weaker expression in brain and placenta.

It is found in the nucleus. The protein localises to the nucleoplasm. Its subcellular location is the PML body. Functionally, DNA-binding transcription regulator that regulates endothelial cell proliferation and G1/S cell-cycle progression. Specifically binds the 5'-[AT]NTNN[GT]GGCA[AGT]-3' core DNA sequence and acts by modulating expression of pRB-E2F cell-cycle target genes, including RRM1. Component of a THAP1/THAP3-HCFC1-OGT complex that is required for the regulation of the transcriptional activity of RRM1. May also have pro-apoptotic activity by potentiating both serum-withdrawal and TNF-induced apoptosis. The polypeptide is THAP domain-containing protein 1 (THAP1) (Homo sapiens (Human)).